We begin with the raw amino-acid sequence, 326 residues long: Protein TMED8 (326 aa).

The tract at residues 1 to 99 (MSDRQAAEGP…EGQAPGEQAA (99 aa)) is disordered. Over residues 50–65 (SSPLASASDPAAESSP) the composition is skewed to low complexity. Positions 160 to 324 (PPCVWTFAKV…NKTLYFHIYY (165 aa)) constitute a GOLD domain. Residue K170 is modified to N6-acetyllysine. The tract at residues 234–268 (VQVSDSSEDEEEEEDEEEEIEEPVPVGDVERGSRS) is disordered. Residues 239-255 (SSEDEEEEEDEEEEIEE) are compositionally biased toward acidic residues.

The protein is Protein TMED8 (Tmed8) of Mus musculus (Mouse).